The sequence spans 311 residues: Malate dehydrogenase (311 aa).

NAD(+) is bound by residues 7–13 (GAAGGIG) and D34. Residues R81 and R87 each coordinate substrate. Residues N94 and 117–119 (ITN) contribute to the NAD(+) site. The substrate site is built by N119 and R153. The active-site Proton acceptor is H177. M227 lines the NAD(+) pocket.

The protein belongs to the LDH/MDH superfamily. MDH type 1 family. In terms of assembly, homodimer.

It carries out the reaction (S)-malate + NAD(+) = oxaloacetate + NADH + H(+). Catalyzes the reversible oxidation of malate to oxaloacetate. This chain is Malate dehydrogenase, found in Yersinia enterocolitica serotype O:8 / biotype 1B (strain NCTC 13174 / 8081).